The chain runs to 183 residues: ATP synthase subunit delta (183 aa).

The protein belongs to the ATPase delta chain family. F-type ATPases have 2 components, F(1) - the catalytic core - and F(0) - the membrane proton channel. F(1) has five subunits: alpha(3), beta(3), gamma(1), delta(1), epsilon(1). CF(0) has four main subunits: a(1), b(1), b'(1) and c(10-14). The alpha and beta chains form an alternating ring which encloses part of the gamma chain. F(1) is attached to F(0) by a central stalk formed by the gamma and epsilon chains, while a peripheral stalk is formed by the delta, b and b' chains.

It is found in the cellular thylakoid membrane. In terms of biological role, f(1)F(0) ATP synthase produces ATP from ADP in the presence of a proton or sodium gradient. F-type ATPases consist of two structural domains, F(1) containing the extramembraneous catalytic core and F(0) containing the membrane proton channel, linked together by a central stalk and a peripheral stalk. During catalysis, ATP synthesis in the catalytic domain of F(1) is coupled via a rotary mechanism of the central stalk subunits to proton translocation. Functionally, this protein is part of the stalk that links CF(0) to CF(1). It either transmits conformational changes from CF(0) to CF(1) or is implicated in proton conduction. This chain is ATP synthase subunit delta, found in Trichormus variabilis (strain ATCC 29413 / PCC 7937) (Anabaena variabilis).